The chain runs to 89 residues: UPF0213 protein HQ_3675A (89 aa).

The GIY-YIG domain maps to D3 to Q78.

It belongs to the UPF0213 family.

The polypeptide is UPF0213 protein HQ_3675A (Haloquadratum walsbyi (strain DSM 16790 / HBSQ001)).